Here is a 428-residue protein sequence, read N- to C-terminus: Histidinol dehydrogenase (428 aa).

The substrate site is built by S234, Q256, and H259. Zn(2+) is bound by residues Q256 and H259. Active-site proton acceptor residues include E323 and H324. 4 residues coordinate substrate: H324, D357, E411, and H416. D357 serves as a coordination point for Zn(2+). H416 contacts Zn(2+).

The protein belongs to the histidinol dehydrogenase family. Zn(2+) serves as cofactor.

The catalysed reaction is L-histidinol + 2 NAD(+) + H2O = L-histidine + 2 NADH + 3 H(+). It participates in amino-acid biosynthesis; L-histidine biosynthesis; L-histidine from 5-phospho-alpha-D-ribose 1-diphosphate: step 9/9. Its function is as follows. Catalyzes the sequential NAD-dependent oxidations of L-histidinol to L-histidinaldehyde and then to L-histidine. This is Histidinol dehydrogenase from Campylobacter jejuni subsp. jejuni serotype O:2 (strain ATCC 700819 / NCTC 11168).